The following is a 400-amino-acid chain: Formate-dependent phosphoribosylglycinamide formyltransferase (400 aa).

Residues 22 to 23 and E82 each bind N(1)-(5-phospho-beta-D-ribosyl)glycinamide; that span reads EL. ATP is bound by residues R115, K157, 162–167, 197–200, and E205; these read SSGKGQ and EGFV. One can recognise an ATP-grasp domain in the interval 120–315; sequence RLAAETLGLP…EFELHARAIL (196 aa). Mg(2+)-binding residues include E274 and E286. N(1)-(5-phospho-beta-D-ribosyl)glycinamide is bound by residues D293, K362, and 369-370; that span reads RR.

This sequence belongs to the PurK/PurT family. As to quaternary structure, homodimer.

The catalysed reaction is N(1)-(5-phospho-beta-D-ribosyl)glycinamide + formate + ATP = N(2)-formyl-N(1)-(5-phospho-beta-D-ribosyl)glycinamide + ADP + phosphate + H(+). It participates in purine metabolism; IMP biosynthesis via de novo pathway; N(2)-formyl-N(1)-(5-phospho-D-ribosyl)glycinamide from N(1)-(5-phospho-D-ribosyl)glycinamide (formate route): step 1/1. In terms of biological role, involved in the de novo purine biosynthesis. Catalyzes the transfer of formate to 5-phospho-ribosyl-glycinamide (GAR), producing 5-phospho-ribosyl-N-formylglycinamide (FGAR). Formate is provided by PurU via hydrolysis of 10-formyl-tetrahydrofolate. In Mycolicibacterium gilvum (strain PYR-GCK) (Mycobacterium gilvum (strain PYR-GCK)), this protein is Formate-dependent phosphoribosylglycinamide formyltransferase.